Consider the following 120-residue polypeptide: Inner membrane protein YidG (120 aa).

Topologically, residues 1–21 are cytoplasmic; that stretch reads MPDSRKARRIADPGLQPERTS. Residues 22-39 form a helical membrane-spanning segment; it reads LAWFRTMLGYGALMALAI. At 40–48 the chain is on the periplasmic side; the sequence is KHNWHQAGM. The helical transmembrane segment at 49–68 threads the bilayer; that stretch reads LFWISIGILAIVALILWHYT. At 69–90 the chain is on the cytoplasmic side; sequence RNRNLMDVTNSDFSQFHVVRDK. Residues 91-113 traverse the membrane as a helical segment; that stretch reads FLISLAVLSLAILFAVTHIHQLI. Residues 114-120 are Periplasmic-facing; it reads VFIERVA.

The protein resides in the cell inner membrane. The polypeptide is Inner membrane protein YidG (yidG) (Escherichia coli O157:H7).